Reading from the N-terminus, the 55-residue chain is ATP synthase F(0) complex subunit 8 (55 aa).

The helical transmembrane segment at tryptophan 9–leucine 29 threads the bilayer.

It belongs to the ATPase protein 8 family. Component of the ATP synthase complex composed at least of ATP5F1A/subunit alpha, ATP5F1B/subunit beta, ATP5MC1/subunit c (homooctomer), MT-ATP6/subunit a, MT-ATP8/subunit 8, ATP5ME/subunit e, ATP5MF/subunit f, ATP5MG/subunit g, ATP5MK/subunit k, ATP5MJ/subunit j, ATP5F1C/subunit gamma, ATP5F1D/subunit delta, ATP5F1E/subunit epsilon, ATP5PF/subunit F6, ATP5PB/subunit b, ATP5PD/subunit d, ATP5PO/subunit OSCP. ATP synthase complex consists of a soluble F(1) head domain (subunits alpha(3) and beta(3)) - the catalytic core - and a membrane F(0) domain - the membrane proton channel (subunits c, a, 8, e, f, g, k and j). These two domains are linked by a central stalk (subunits gamma, delta, and epsilon) rotating inside the F1 region and a stationary peripheral stalk (subunits F6, b, d, and OSCP).

Its subcellular location is the mitochondrion membrane. In terms of biological role, subunit 8, of the mitochondrial membrane ATP synthase complex (F(1)F(0) ATP synthase or Complex V) that produces ATP from ADP in the presence of a proton gradient across the membrane which is generated by electron transport complexes of the respiratory chain. ATP synthase complex consist of a soluble F(1) head domain - the catalytic core - and a membrane F(1) domain - the membrane proton channel. These two domains are linked by a central stalk rotating inside the F(1) region and a stationary peripheral stalk. During catalysis, ATP synthesis in the catalytic domain of F(1) is coupled via a rotary mechanism of the central stalk subunits to proton translocation. In vivo, can only synthesize ATP although its ATP hydrolase activity can be activated artificially in vitro. Part of the complex F(0) domain. The polypeptide is ATP synthase F(0) complex subunit 8 (Rhea americana (Greater rhea)).